Consider the following 75-residue polypeptide: uncharacterized protein (75 aa).

2 helical membrane-spanning segments follow: residues 7–26 (LINA…AASA) and 36–58 (MHLF…FCPV).

It is found in the cell membrane. This is an uncharacterized protein from Bacillus subtilis (strain 168).